The primary structure comprises 162 residues: Nitric oxide synthase, inducible (162 aa).

Over residues L24–P37 the composition is skewed to polar residues. The interval L24 to V65 is disordered. Zn(2+) contacts are provided by C90 and C95. Residue S98 coordinates (6R)-L-erythro-5,6,7,8-tetrahydrobiopterin. E132 contacts L-arginine. Residue H160 participates in FAD binding.

This sequence belongs to the NOS family. Homodimer. Interacts with NHERF1. Interacts with GAPDH; induced by oxidatively-modified low-densitity lipoprotein (LDL(ox)). Interacts with S100A8 and S100A9 to form the iNOS-S100A8/9 transnitrosylase complex. Interacts with SPSB1, SPSB2 and SPSB4. Interacts with ELOC and CUL5 in the presence of SPSB1 or SPSB2 or SPSB4. Forms a complex with ASL, ASS1 and HSP90AA1; the complex regulates cell-autonomous L-arginine synthesis and citrulline recycling while channeling extracellular L-arginine to nitric oxide synthesis pathway. Requires heme b as cofactor. It depends on FAD as a cofactor. The cofactor is FMN. (6R)-L-erythro-5,6,7,8-tetrahydrobiopterin is required as a cofactor. Polyubiquitinated; mediated by SPSB1, SPSB2 and SPSB4, leading to proteasomal degradation.

The protein resides in the cytoplasm. The protein localises to the cytosol. It carries out the reaction 2 L-arginine + 3 NADPH + 4 O2 + H(+) = 2 L-citrulline + 2 nitric oxide + 3 NADP(+) + 4 H2O. Its activity is regulated as follows. Regulated by calcium/calmodulin. In terms of biological role, produces nitric oxide (NO) which is a messenger molecule with diverse functions throughout the body. In macrophages, NO mediates tumoricidal and bactericidal actions. Also has nitrosylase activity and mediates cysteine S-nitrosylation of cytoplasmic target proteins such PTGS2/COX2. As component of the iNOS-S100A8/9 transnitrosylase complex involved in the selective inflammatory stimulus-dependent S-nitrosylation of GAPDH implicated in regulation of the GAIT complex activity and probably multiple targets including ANXA5, EZR, MSN and VIM. Involved in inflammation, enhances the synthesis of pro-inflammatory mediators such as IL6 and IL8. The protein is Nitric oxide synthase, inducible (NOS2) of Macaca mulatta (Rhesus macaque).